A 319-amino-acid chain; its full sequence is Beta-ketoacyl-[acyl-carrier-protein] synthase III (319 aa).

Catalysis depends on residues C113 and H246. Positions 247 to 251 (QANLR) are ACP-binding. N276 is a catalytic residue.

It belongs to the thiolase-like superfamily. FabH family. Homodimer.

The protein localises to the cytoplasm. The enzyme catalyses malonyl-[ACP] + acetyl-CoA + H(+) = 3-oxobutanoyl-[ACP] + CO2 + CoA. The protein operates within lipid metabolism; fatty acid biosynthesis. Functionally, catalyzes the condensation reaction of fatty acid synthesis by the addition to an acyl acceptor of two carbons from malonyl-ACP. Catalyzes the first condensation reaction which initiates fatty acid synthesis and may therefore play a role in governing the total rate of fatty acid production. Possesses both acetoacetyl-ACP synthase and acetyl transacylase activities. Its substrate specificity determines the biosynthesis of branched-chain and/or straight-chain of fatty acids. The polypeptide is Beta-ketoacyl-[acyl-carrier-protein] synthase III (Laribacter hongkongensis (strain HLHK9)).